The chain runs to 207 residues: 3-hexulose-6-phosphate synthase (207 aa).

This sequence belongs to the HPS/KGPDC family. HPS subfamily.

The catalysed reaction is D-ribulose 5-phosphate + formaldehyde = D-arabino-hex-3-ulose 6-phosphate. The protein operates within one-carbon metabolism; formaldehyde assimilation via RuMP pathway; D-fructose 6-phosphate from D-ribulose 5-phosphate and formaldehyde: step 1/2. In terms of biological role, catalyzes the condensation of ribulose 5-phosphate with formaldehyde to form 3-hexulose 6-phosphate. The polypeptide is 3-hexulose-6-phosphate synthase (rmpA) (Mycobacterium gastri).